A 1358-amino-acid polypeptide reads, in one-letter code: DNA-directed RNA polymerase subunit beta (1358 aa).

It belongs to the RNA polymerase beta chain family. The RNAP catalytic core consists of 2 alpha, 1 beta, 1 beta' and 1 omega subunit. When a sigma factor is associated with the core the holoenzyme is formed, which can initiate transcription.

It carries out the reaction RNA(n) + a ribonucleoside 5'-triphosphate = RNA(n+1) + diphosphate. DNA-dependent RNA polymerase catalyzes the transcription of DNA into RNA using the four ribonucleoside triphosphates as substrates. This Francisella tularensis subsp. novicida (strain U112) protein is DNA-directed RNA polymerase subunit beta.